Here is a 244-residue protein sequence, read N- to C-terminus: Ribosomal RNA large subunit methyltransferase E (244 aa).

5 residues coordinate S-adenosyl-L-methionine: Gly81, Trp83, Asp109, Asp125, and Asp149. Lys189 acts as the Proton acceptor in catalysis.

It belongs to the class I-like SAM-binding methyltransferase superfamily. RNA methyltransferase RlmE family.

The protein resides in the cytoplasm. It catalyses the reaction uridine(2552) in 23S rRNA + S-adenosyl-L-methionine = 2'-O-methyluridine(2552) in 23S rRNA + S-adenosyl-L-homocysteine + H(+). Its function is as follows. Specifically methylates the uridine in position 2552 of 23S rRNA at the 2'-O position of the ribose in the fully assembled 50S ribosomal subunit. In Cereibacter sphaeroides (strain ATCC 17023 / DSM 158 / JCM 6121 / CCUG 31486 / LMG 2827 / NBRC 12203 / NCIMB 8253 / ATH 2.4.1.) (Rhodobacter sphaeroides), this protein is Ribosomal RNA large subunit methyltransferase E.